The primary structure comprises 446 residues: Tubulin beta chain (446 aa).

Gln11, Glu69, Ser138, Gly142, Thr143, Gly144, Asn204, and Asn226 together coordinate GTP. Position 69 (Glu69) interacts with Mg(2+). Residues 426 to 446 (QDATAEEEGEYVEDEDEMDGM) form a disordered region. Over residues 429 to 446 (TAEEEGEYVEDEDEMDGM) the composition is skewed to acidic residues.

The protein belongs to the tubulin family. As to quaternary structure, dimer of alpha and beta chains. A typical microtubule is a hollow water-filled tube with an outer diameter of 25 nm and an inner diameter of 15 nM. Alpha-beta heterodimers associate head-to-tail to form protofilaments running lengthwise along the microtubule wall with the beta-tubulin subunit facing the microtubule plus end conferring a structural polarity. Microtubules usually have 13 protofilaments but different protofilament numbers can be found in some organisms and specialized cells. Requires Mg(2+) as cofactor.

The protein localises to the cytoplasm. Its subcellular location is the cytoskeleton. Its function is as follows. Tubulin is the major constituent of microtubules, a cylinder consisting of laterally associated linear protofilaments composed of alpha- and beta-tubulin heterodimers. Microtubules grow by the addition of GTP-tubulin dimers to the microtubule end, where a stabilizing cap forms. Below the cap, tubulin dimers are in GDP-bound state, owing to GTPase activity of alpha-tubulin. This Euplotes crassus protein is Tubulin beta chain.